The primary structure comprises 465 residues: Ribulose bisphosphate carboxylase large chain (465 aa).

Lys4 carries the post-translational modification N6,N6,N6-trimethyllysine. 2 residues coordinate substrate: Asn113 and Thr163. Lys165 acts as the Proton acceptor in catalysis. Residue Lys167 coordinates substrate. Positions 191, 193, and 194 each coordinate Mg(2+). At Lys191 the chain carries N6-carboxylysine. His284 acts as the Proton acceptor in catalysis. 3 residues coordinate substrate: Arg285, His317, and Ser369.

Belongs to the RuBisCO large chain family. Type I subfamily. As to quaternary structure, heterohexadecamer of 8 large chains and 8 small chains; disulfide-linked. The disulfide link is formed within the large subunit homodimers. Requires Mg(2+) as cofactor. In terms of processing, the disulfide bond which can form in the large chain dimeric partners within the hexadecamer appears to be associated with oxidative stress and protein turnover.

It is found in the plastid. The protein localises to the chloroplast. It catalyses the reaction 2 (2R)-3-phosphoglycerate + 2 H(+) = D-ribulose 1,5-bisphosphate + CO2 + H2O. The catalysed reaction is D-ribulose 1,5-bisphosphate + O2 = 2-phosphoglycolate + (2R)-3-phosphoglycerate + 2 H(+). Functionally, ruBisCO catalyzes two reactions: the carboxylation of D-ribulose 1,5-bisphosphate, the primary event in carbon dioxide fixation, as well as the oxidative fragmentation of the pentose substrate in the photorespiration process. Both reactions occur simultaneously and in competition at the same active site. This chain is Ribulose bisphosphate carboxylase large chain, found in Cornus florida (Flowering dogwood).